Consider the following 654-residue polypeptide: MKRSTANAPKLSPKHESESDPKKVKLEEEAKPTVNQAPTGREIVENYLKGDVTAAVLYRKICNALETFEQWESEAPKIQLLDQFLNIADAMEARTETLVKRLLSLRWDKIPGSVIERFRNFLCELAIRHLCFTEEVYSAVVERLVPQISVTEETGVVTLILTEKVQNEHFEMAHHIISSVLRCFPLSARALLKCVKRVMPHFTRPSVTVAGYMRNLILMQKYIPASISKDVWEAVFERLAKDDTHNWKCEQNEEMSKSPRLFALNDDILIEEVVEGNTNDSEDVTPEQLEQRKGEQMIQYLDSVCTDVITFIRSSVDSEIDEENGNERTKLNDKWLRNFKITGDKVLPKEKLFDTFLECLESTMLNATHVQYVSFIWLYFCSLSQEYEKKMLEHLWQVTIRMPRAPADARKSQGAASYLAAFLARAKYVKKSTAFTWLEEVYIWLRHYVDQFGSGSSQILPGLQRHGTFYSVSQAFFLVFAFRYKEFVKNKDMLETIRRWGVGRVVHSPLEPLKYVSKPVARCFSAITRSLQLVYCNHIIPIEEVQRPFDDMFPFDCYHLKESSKFMTPLMRKFSPLAEDMSTLTKALCWNAATADKSEKSAEAVSSSEGLDFLDEDDAMMMGGSSGYRERTFSCGQSSLINYSATPGLQTFNV.

Residues 1–37 form a disordered region; sequence MKRSTANAPKLSPKHESESDPKKVKLEEEAKPTVNQA. The span at 13-31 shows a compositional bias: basic and acidic residues; that stretch reads PKHESESDPKKVKLEEEAK.

It belongs to the RRN3 family.

The protein resides in the nucleus. The protein localises to the nucleolus. Functionally, required for efficient transcription initiation by RNA polymerase I (Pol I). In Caenorhabditis elegans, this protein is RNA polymerase I-specific transcription initiation factor tif-1A.